The following is a 201-amino-acid chain: Putative lipoprotein LppC (201 aa).

A signal peptide spans 1 to 23; that stretch reads MTSTLHRTPLATAGLALVVALGG. Residue Cys24 is the site of N-palmitoyl cysteine attachment. Residue Cys24 is the site of S-diacylglycerol cysteine attachment. Prevents bacterial uptake by a human macrophage-like cell line regions lie at residues 77–96, 97–116, and 117–136; these read GANV…AELA, LVVD…IVTG, and IAPG…GHSV. Residues 122-141 form a disordered region; sequence GSTADGQTPAGGHSVPNSGG.

It belongs to the UPF0098 family.

It localises to the cell membrane. Its subcellular location is the cell surface. Functionally, probably involved in bacterial recognition and uptake by its host (human). In Mycobacterium tuberculosis (strain ATCC 25618 / H37Rv), this protein is Putative lipoprotein LppC.